The chain runs to 172 residues: C-phycocyanin-2 beta subunit (172 aa).

An N4-methylasparagine modification is found at Asn72. 2 residues coordinate (2R,3E)-phycocyanobilin: Cys82 and Cys153.

It belongs to the phycobiliprotein family. As to quaternary structure, heterodimer of an alpha and a beta subunit, which further assembles into trimers and the trimers into hexamers. In terms of processing, contains two covalently linked bilin chromophores.

The protein localises to the cellular thylakoid membrane. Its function is as follows. Light-harvesting photosynthetic bile pigment-protein from the phycobiliprotein complex (phycobilisome, PBS). Phycocyanin is the major phycobiliprotein in the PBS rod. The protein is C-phycocyanin-2 beta subunit (cpcB2) of Microchaete diplosiphon (Fremyella diplosiphon).